A 360-amino-acid chain; its full sequence is Phospho-N-acetylmuramoyl-pentapeptide-transferase (360 aa).

A run of 10 helical transmembrane segments spans residues 25-45, 73-93, 97-117, 142-162, 167-187, 199-219, 236-256, 263-283, 288-308, and 338-358; these read RGIL…PWMI, TMGG…WADL, YVWV…VDDY, IGAA…TLIV, SVEI…IVGS, GLAI…CYLS, AGEL…FLWF, VFMG…IAVI, IVLF…MIQV, and VIVR…ATLK.

This sequence belongs to the glycosyltransferase 4 family. MraY subfamily. It depends on Mg(2+) as a cofactor.

It is found in the cell inner membrane. The catalysed reaction is UDP-N-acetyl-alpha-D-muramoyl-L-alanyl-gamma-D-glutamyl-meso-2,6-diaminopimeloyl-D-alanyl-D-alanine + di-trans,octa-cis-undecaprenyl phosphate = di-trans,octa-cis-undecaprenyl diphospho-N-acetyl-alpha-D-muramoyl-L-alanyl-D-glutamyl-meso-2,6-diaminopimeloyl-D-alanyl-D-alanine + UMP. The protein operates within cell wall biogenesis; peptidoglycan biosynthesis. In terms of biological role, catalyzes the initial step of the lipid cycle reactions in the biosynthesis of the cell wall peptidoglycan: transfers peptidoglycan precursor phospho-MurNAc-pentapeptide from UDP-MurNAc-pentapeptide onto the lipid carrier undecaprenyl phosphate, yielding undecaprenyl-pyrophosphoryl-MurNAc-pentapeptide, known as lipid I. This chain is Phospho-N-acetylmuramoyl-pentapeptide-transferase, found in Pseudomonas aeruginosa (strain LESB58).